A 214-amino-acid polypeptide reads, in one-letter code: Tungstate uptake system ATP-binding protein TupC (214 aa).

An ABC transporter domain is found at 3–214 (ITVSNLKKSY…GRVGEADGFF (212 aa)). 35–42 (GPNGAGKT) contacts ATP.

It belongs to the ABC transporter superfamily. The complex is composed of two ATP-binding proteins (TupC), two transmembrane proteins (TupB) and a solute-binding protein (TupA).

The catalysed reaction is tungstate(in) + ATP + H2O = tungstate(out) + ADP + phosphate + H(+). Its function is as follows. Part of an ABC transporter complex involved in tungstate uptake. Probably responsible for energy coupling to the transport system. This chain is Tungstate uptake system ATP-binding protein TupC, found in Peptoclostridium acidaminophilum (Eubacterium acidaminophilum).